Reading from the N-terminus, the 254-residue chain is MRKYTRNTYTMSQKRKVNPQSAWPKKRRTSTTSRKYQWRRPVTKNRTLKLKMYDDMLGAGGIGSTISNNGMITMLNNYVQGIGDSQRARNVTVTKHLKFDMALMGSSQFWETPNYMTQYHWIIIDKDVGSVFPTKLSSIFDIPDNGQAMPSTYRIRRDMNERFIVKKKWRTHLMSTGTGYGGKETYKAPSMPNYKKPMNINVRNLNMRTIWKDTGGGKYEDVKENALLYVVVNDNTDNTNMYATLFGNCRCYFY.

A compositionally biased stretch (polar residues) spans 1-12 (MRKYTRNTYTMS). Residues 1 to 38 (MRKYTRNTYTMSQKRKVNPQSAWPKKRRTSTTSRKYQW) form a disordered region. The Bipartite nuclear localization signal signature appears at 10–35 (TMSQKRKVNPQSAWPKKRRTSTTSRK).

The protein belongs to the geminiviridae capsid protein family. As to quaternary structure, homomultimer. Binds to single-stranded and double-stranded viral DNA. Interacts (via nuclear localization signal) with host importin alpha-1a.

It is found in the virion. The protein localises to the host nucleus. Its function is as follows. Encapsidates the viral genome into characteristic twinned ('geminate') particles. Binds the genomic viral ssDNA and shuttles it into and out of the cell nucleus. Plays a role in protection of the genome from degradation, virus acquisition and transmission by insect vectors, infectivity, and systemic movement. The CP of monopartite geminiviruses is absolutely essential for virus movement. The protein is Capsid protein of Beet curly top virus (strain California/Logan) (BCTV).